The following is a 396-amino-acid chain: S-adenosylmethionine synthase (396 aa).

His15 contacts ATP. Residue Asp17 participates in Mg(2+) binding. Residue Glu43 participates in K(+) binding. Glu56 and Gln99 together coordinate L-methionine. The flexible loop stretch occupies residues 99–109 (QSPDIALGVNR). Residues 175–177 (DGK), 241–242 (RF), Asp250, 256–257 (RK), Ala273, and Lys277 contribute to the ATP site. Residue Asp250 participates in L-methionine binding. Lys281 lines the L-methionine pocket.

The protein belongs to the AdoMet synthase family. As to quaternary structure, homotetramer; dimer of dimers. The cofactor is Mg(2+). K(+) is required as a cofactor.

The protein resides in the cytoplasm. It catalyses the reaction L-methionine + ATP + H2O = S-adenosyl-L-methionine + phosphate + diphosphate. Its pathway is amino-acid biosynthesis; S-adenosyl-L-methionine biosynthesis; S-adenosyl-L-methionine from L-methionine: step 1/1. Catalyzes the formation of S-adenosylmethionine (AdoMet) from methionine and ATP. The overall synthetic reaction is composed of two sequential steps, AdoMet formation and the subsequent tripolyphosphate hydrolysis which occurs prior to release of AdoMet from the enzyme. This Carboxydothermus hydrogenoformans (strain ATCC BAA-161 / DSM 6008 / Z-2901) protein is S-adenosylmethionine synthase.